A 222-amino-acid chain; its full sequence is Cytidylate kinase (222 aa).

7-15 (GPSASGKST) is a binding site for ATP.

Belongs to the cytidylate kinase family. Type 1 subfamily.

It localises to the cytoplasm. The enzyme catalyses CMP + ATP = CDP + ADP. It carries out the reaction dCMP + ATP = dCDP + ADP. The chain is Cytidylate kinase from Aquifex aeolicus (strain VF5).